The chain runs to 435 residues: Serine--tRNA ligase (435 aa).

Thr-242 to Glu-244 contacts L-serine. Arg-273 to Glu-275 provides a ligand contact to ATP. Glu-296 contacts L-serine. Residue Glu-360–Ser-363 participates in ATP binding. An L-serine-binding site is contributed by Ser-396.

This sequence belongs to the class-II aminoacyl-tRNA synthetase family. Type-1 seryl-tRNA synthetase subfamily. Homodimer. The tRNA molecule binds across the dimer.

The protein resides in the cytoplasm. It carries out the reaction tRNA(Ser) + L-serine + ATP = L-seryl-tRNA(Ser) + AMP + diphosphate + H(+). It catalyses the reaction tRNA(Sec) + L-serine + ATP = L-seryl-tRNA(Sec) + AMP + diphosphate + H(+). It participates in aminoacyl-tRNA biosynthesis; selenocysteinyl-tRNA(Sec) biosynthesis; L-seryl-tRNA(Sec) from L-serine and tRNA(Sec): step 1/1. Catalyzes the attachment of serine to tRNA(Ser). Is also able to aminoacylate tRNA(Sec) with serine, to form the misacylated tRNA L-seryl-tRNA(Sec), which will be further converted into selenocysteinyl-tRNA(Sec). The polypeptide is Serine--tRNA ligase (Vibrio campbellii (strain ATCC BAA-1116)).